Here is a 455-residue protein sequence, read N- to C-terminus: Enolase (455 aa).

Gln166 is a (2R)-2-phosphoglycerate binding site. Residue Glu208 is the Proton donor of the active site. Mg(2+) is bound by residues Asp249, Glu311, and Asp338. (2R)-2-phosphoglycerate is bound by residues Lys363, Arg392, Ser393, and Lys414. The active-site Proton acceptor is the Lys363.

This sequence belongs to the enolase family. The cofactor is Mg(2+).

Its subcellular location is the cytoplasm. It is found in the secreted. It localises to the cell surface. The enzyme catalyses (2R)-2-phosphoglycerate = phosphoenolpyruvate + H2O. It participates in carbohydrate degradation; glycolysis; pyruvate from D-glyceraldehyde 3-phosphate: step 4/5. Its function is as follows. Catalyzes the reversible conversion of 2-phosphoglycerate (2-PG) into phosphoenolpyruvate (PEP). It is essential for the degradation of carbohydrates via glycolysis. The chain is Enolase from Mycoplasma mobile (strain ATCC 43663 / 163K / NCTC 11711) (Mesomycoplasma mobile).